We begin with the raw amino-acid sequence, 349 residues long: DNA-directed RNA polymerase subunit alpha (349 aa).

The segment at methionine 1 to asparagine 226 is alpha N-terminal domain (alpha-NTD). An alpha C-terminal domain (alpha-CTD) region spans residues alanine 241–tyrosine 349. The disordered stretch occupies residues leucine 308–tyrosine 349. A compositionally biased stretch (acidic residues) spans proline 336–tyrosine 349.

The protein belongs to the RNA polymerase alpha chain family. As to quaternary structure, homodimer. The RNAP catalytic core consists of 2 alpha, 1 beta, 1 beta' and 1 omega subunit. When a sigma factor is associated with the core the holoenzyme is formed, which can initiate transcription.

The catalysed reaction is RNA(n) + a ribonucleoside 5'-triphosphate = RNA(n+1) + diphosphate. DNA-dependent RNA polymerase catalyzes the transcription of DNA into RNA using the four ribonucleoside triphosphates as substrates. The chain is DNA-directed RNA polymerase subunit alpha from Frankia alni (strain DSM 45986 / CECT 9034 / ACN14a).